The primary structure comprises 606 residues: WD repeat-containing protein 1 (606 aa).

WD repeat units follow at residues 4–45 (EIKK…LRNI), 48–87 (PAVADIYTEHAHQVVVAKYAPSGFYIASGDISGKLRIWDT), 93–135 (ILKY…LWDT), 138–176 (SVGEITGHNKVINSVDIKQNRPYRLATGSDDNCAAFFEG), 180–218 (KFKFTIGDHSRFVNCVRFSPDGNRFATASADGQIFIYDG), 224–263 (VCALGGSKAHDGGIYAISWSPDSTHLLSASGDKTSKIWDV), 270–306 (STFPMGSNVLDQQLGCLWQKDHLLSISLSGYINYLDK), 311–351 (KPLR…YWDS), 358–408 (SFSG…KLDV), 432–474 (LKDQ…VYSI), 480–518 (KDEGKLLEAKGPVTDLAYSHDGAFLAVCDASKVVTVFSV), 523–561 (SENNVFYGHHAKIVCLAWSPDNEHFASGGMDMMVYVWTL), and 566–604 (TKVKIQDAHRLHHVSSLAWLDEHTLVTTSHDASVKEWTI). An N6-acetyllysine mark is found at Lys28, Lys81, Lys95, and Lys115. Phosphotyrosine is present on Tyr238. At Lys480 the chain carries N6-acetyllysine.

Belongs to the WD repeat AIP1 family.

The protein resides in the cytoplasm. Its subcellular location is the cytoskeleton. It is found in the cell projection. The protein localises to the podosome. Its function is as follows. Induces disassembly of actin filaments in conjunction with ADF/cofilin family proteins. Enhances cofilin-mediated actin severing. Involved in cytokinesis. Involved in chemotactic cell migration by restricting lamellipodial membrane protrusions. Involved in myocardium sarcomere organization. Required for cardiomyocyte growth and maintenance. Involved in megakaryocyte maturation and platelet shedding. Required for the establishment of planar cell polarity (PCP) during follicular epithelium development and for cell shape changes during PCP; the function seems to implicate cooperation with CFL1 and/or DSTN/ADF. Involved in the generation/maintenance of cortical tension. Involved in assembly and maintenance of epithelial apical cell junctions and plays a role in the organization of the perijunctional actomyosin belt. This chain is WD repeat-containing protein 1 (Wdr1), found in Rattus norvegicus (Rat).